The primary structure comprises 33 residues: Photosystem II reaction center protein Psb30 (33 aa).

The helical transmembrane segment at I5–L25 threads the bilayer.

Belongs to the Psb30/Ycf12 family. In terms of assembly, PSII is composed of 1 copy each of membrane proteins PsbA, PsbB, PsbC, PsbD, PsbE, PsbF, PsbH, PsbI, PsbJ, PsbK, PsbL, PsbM, PsbT, PsbX, PsbY, PsbZ, Psb30/Ycf12, peripheral proteins of the oxygen-evolving complex and a large number of cofactors. It forms dimeric complexes.

Its subcellular location is the plastid. The protein resides in the chloroplast thylakoid membrane. Its function is as follows. A core subunit of photosystem II (PSII), probably helps stabilize the reaction center. The sequence is that of Photosystem II reaction center protein Psb30 from Tetradesmus obliquus (Green alga).